A 301-amino-acid chain; its full sequence is Glycine cleavage system transcriptional activator homolog (301 aa).

One can recognise an HTH lysR-type domain in the interval P10–T67. The segment at residues F27 to K46 is a DNA-binding region (H-T-H motif).

The protein belongs to the LysR transcriptional regulatory family.

The protein resides in the cytoplasm. Functionally, not known, the gcv operon regulated by the E.coli homolog does not exist in H.influenzae, so it probably acts as a transcriptional regulator on some other operon. The polypeptide is Glycine cleavage system transcriptional activator homolog (gcvA) (Haemophilus influenzae (strain ATCC 51907 / DSM 11121 / KW20 / Rd)).